The chain runs to 731 residues: ARS-binding factor 1 (731 aa).

A Glycyl lysine isopeptide (Lys-Gly) (interchain with G-Cter in ubiquitin) cross-link involves residue K18. 2 stretches are compositionally biased toward low complexity: residues 84–99 and 111–129; these read ASSE…NTNP and NNMN…NKVS. Disordered regions lie at residues 84-132, 146-227, 251-308, and 439-463; these read ASSE…SNDS, ANTH…DDVH, VANV…PSSI, and YNDL…GTNL. Residues 149-161 are compositionally biased toward basic and acidic residues; the sequence is HPDDTNDKVESRS. The span at 177–186 shows a compositional bias: polar residues; it reads IFKQQGVTIK. A Phosphothreonine modification is found at T189. S193 is subject to Phosphoserine. Low complexity-rich tracts occupy residues 270–308 and 445–454; these read TNNN…PSSI and SSSSNNNNNN. S467 is subject to Phosphoserine. The segment at 475 to 539 is disordered; sequence EISSAGTSSN…PSVNKWSKPD (65 aa). A compositionally biased stretch (low complexity) spans 481–510; the sequence is TSSNTTKNVNNNKNDSNDDNNGNNNNDASN. Phosphoserine occurs at positions 554 and 618. Disordered stretches follow at residues 590–643 and 687–731; these read RSID…DDKL and KNTT…LRGQ. At S624 the chain carries Phosphoserine; by PKC. C-terminal sequence regions lie at residues 624-628 and 639-662; these read SKRQH and EDDK…KEVE. Residues 634–643 show a composition bias toward basic and acidic residues; that stretch reads LEERNEDDKL. Over residues 689 to 698 the composition is skewed to basic residues; the sequence is TTHHNNHHSQ. Residue S720 is modified to Phosphoserine; by CK2.

Belongs to the BAF1 family. In terms of assembly, component of the global genome repair (GGR) complex composed of at least ABF1, RAD7 and RAD16. Interacts with PSE1. Extensively phosphorylated on Ser and Thr residues.

It localises to the nucleus. Its function is as follows. General regulatory factor (GRF) that contributes to transcriptional activation of a large number of genes, as well as to DNA replication, silencing and telomere structure. Involved in the transcription activation of a subset of ribosomal protein genes. Binds the ARS-elements found in many promoters. Binds to the sequence 5'-TCN(7)ACG-3'. Influences on genome-wide nucleosome occupancy and affects chromatin structure, and probably dynamics. As a component of the global genome repair (GGR) complex, promotes global genome nucleotide excision repair (GG-NER) which removes DNA damage from nontranscribing DNA. Component of the regulatory network controlling mitotic and meiotic cell cycle progression. The sequence is that of ARS-binding factor 1 (ABF1) from Saccharomyces cerevisiae (strain ATCC 204508 / S288c) (Baker's yeast).